A 158-amino-acid chain; its full sequence is Toxin Tse2 (158 aa).

In terms of assembly, forms a heterotetramer with Tsi2 consisting of two Tse2 dimers and two Tsi2 dimers. Formation of the complex inactivates Tse2 enzymatic activity.

It is found in the secreted. Functionally, toxin secreted by the H1 type VI (H1-T6SS) secretion system into the cytoplasm of recipient cells. Acts likely as a NAD-dependent cytotoxin towards both prokaryotic and eukaryotic cells. This is Toxin Tse2 from Pseudomonas aeruginosa (strain ATCC 15692 / DSM 22644 / CIP 104116 / JCM 14847 / LMG 12228 / 1C / PRS 101 / PAO1).